The following is a 409-amino-acid chain: MNVSAIVVEYNPMHNGHLHHIKKTKELTNCDALVCIMSGNFVQRGFPSILDKWTKASIAISNGVDLVIELPTLYSLSSAEFFSFGAVSILDSLNIINSICFGSEIGNINALQDIASTLLEEPLEYKILLKNYLDKGISFAKARNLALVELNRDNKIMSENINKILSLSNNILGIEYLKSLLLLNSSIKPFTITREGADYKDENLHKEYSSASSIRKYLKENKNINILKDFLPLEGFLEFKRLITKGYNFSMEDSMINYIRYKYISGYKNLHNLIDVSEGLDNRIYKSLEKNFTYDSLVGEIKSKRYAYSRIGRILCQYFIGFENYDLNSLLKSTPNYMRVLASNEIGLKVLKKIKRHSSTNIYTKIPKNTNTLLNLDIKATNAYSLLNNNIRFNEDYFRSPIIIKNTIY.

ATP is bound by residues 7–20, G102, N169, and R194; that span reads VVEY…HLHH.

This sequence belongs to the TmcAL family.

Its subcellular location is the cytoplasm. The catalysed reaction is cytidine(34) in elongator tRNA(Met) + acetate + ATP = N(4)-acetylcytidine(34) in elongator tRNA(Met) + AMP + diphosphate. Catalyzes the formation of N(4)-acetylcytidine (ac(4)C) at the wobble position of elongator tRNA(Met), using acetate and ATP as substrates. First activates an acetate ion to form acetyladenylate (Ac-AMP) and then transfers the acetyl group to tRNA to form ac(4)C34. In Clostridium botulinum (strain Loch Maree / Type A3), this protein is tRNA(Met) cytidine acetate ligase.